Consider the following 270-residue polypeptide: MSGGLDILSLKEDDITKMLVATTHLGSENVNFQMEQYVYKRRADGVNIINLGKTWEKLQLAARAIVAIENASDVFVISSRPIGQRAVLKFAKYTDTTPIAGRFTPGAFTNQIQPAFREPRLLVVTDPMTDHQPIMEASYVNIPVIAFTNTDSPLRYIDIAIPCNNKSAHSIGLMWWLLAREVLRLRGTISRTVEWPVVVDLYFYRDPEEAEKEEAAAKELLPPPKIEEVVDHPVEETTNWADEVAAETVGGVEDWNEDTVKTSWGSDGQF.

It belongs to the universal ribosomal protein uS2 family. In terms of assembly, component of the small ribosomal subunit. Mature ribosomes consist of a small (40S) and a large (60S) subunit. The 40S subunit contains about 33 different proteins and 1 molecule of RNA (18S). The 60S subunit contains about 49 different proteins and 3 molecules of RNA (28S, 5.8S and 5S). Interacts with oho23B/rpS21.

It localises to the cytoplasm. Its subcellular location is the nucleus. Required for the assembly and/or stability of the 40S ribosomal subunit. Required for the processing of the 20S rRNA-precursor to mature 18S rRNA in a late step of the maturation of 40S ribosomal subunits. Required during oogenesis and imaginal development. The sequence is that of Small ribosomal subunit protein uS2 from Drosophila persimilis (Fruit fly).